Reading from the N-terminus, the 402-residue chain is Cholinephosphotransferase 1 (402 aa).

Over 1-62 (MGLAEGLAAR…LVEKVPLWLA (62 aa)) the chain is Cytoplasmic. A helical transmembrane segment spans residues 63 to 83 (PNTITMVGLLLNVLSTLILVC). Residue Asn64 participates in CDP-choline binding. Residues 84-93 (YCPTATEGAP) lie on the Lumenal side of the membrane. Residues 94-118 (FWTYLLCAIGLFVYQSLDAIDGKQA) traverse the membrane as a helical segment. The Mg(2+) site is built by Asp111 and Asp114. Position 119 (Arg119) interacts with CDP-choline. The Cytoplasmic portion of the chain corresponds to 119 to 125 (RRTNSSS). Residues 126 to 150 (PLGEMFDHGCDSISIVFVNLGTIAA) traverse the membrane as a helical segment. Asp132 is a binding site for Mg(2+). His133 serves as the catalytic Proton acceptor. Mg(2+) is bound at residue Asp136. Residues 151–160 (VRLGTLPGWM) are Lumenal-facing. The chain crosses the membrane as a helical span at residues 161 to 179 (FYCCFVGMFMFYCAQWQTY). Over 180-190 (VCGTLKFGIID) the chain is Cytoplasmic. Residues 191 to 207 (VTELQISVTVMFLMTAV) form a helical membrane-spanning segment. Residues 208–222 (CGPELWDYEIPFTGL) lie on the Lumenal side of the membrane. Residues 223–248 (PMKTIPLLGIIGGTVYSCSNYFRVIL) traverse the membrane as a helical segment. Residues 249-265 (SGGVGKNGSTVAGTSVL) are Cytoplasmic-facing. The helical transmembrane segment at 266-281 (SPGLHIGLVLLLALMI) threads the bilayer. Residues 282–293 (YKKSTTNLFLQN) are Lumenal-facing. The chain crosses the membrane as a helical span at residues 294–316 (PCLYTLAFGFVSAKITIKLVIAH). Topologically, residues 317–329 (MTKSEISLQDTAF) are cytoplasmic. The helical transmembrane segment at 330 to 339 (IGPGLLFFNQ) threads the bilayer. The Lumenal portion of the chain corresponds to 340–346 (YFNSFID). A helical membrane pass occupies residues 347-376 (EYIVLWIAMVISFADLLRYCISVCLQIATH). Residues 377–402 (LRISVFRISSNQAAEQVQTQKQKLTD) lie on the Cytoplasmic side of the membrane.

It belongs to the CDP-alcohol phosphatidyltransferase class-I family. As to quaternary structure, homodimer. Mg(2+) is required as a cofactor. It depends on Mn(2+) as a cofactor.

The protein localises to the golgi apparatus membrane. It catalyses the reaction CDP-choline + a 1,2-diacyl-sn-glycerol = a 1,2-diacyl-sn-glycero-3-phosphocholine + CMP + H(+). It carries out the reaction 1,2-dioctanoyl-sn-glycerol + CDP-choline = 1,2-dioctanoyl-sn-glycero-3-phosphocholine + CMP + H(+). The enzyme catalyses 1-octadecanoyl-2-(5Z,8Z,11Z,14Z-eicosatetraenoyl)-sn-glycerol + CDP-choline = 1-octadecanoyl-2-(5Z,8Z,11Z,14Z-eicosatetraenoyl)-sn-glycero-3-phosphocholine + CMP + H(+). The catalysed reaction is 1-hexadecanoyl-2-(9Z-octadecenoyl)-sn-glycerol + CDP-choline = 1-hexadecanoyl-2-(9Z-octadecenoyl)-sn-glycero-3-phosphocholine + CMP + H(+). It catalyses the reaction 1-hexadecanoyl-2-(4Z,7Z,10Z,13Z,16Z,19Z-docosahexaenoyl)-sn-glycerol + CDP-choline = 1-hexadecanoyl-2-(4Z,7Z,10Z,13Z,16Z,19Z-docosahexaenoyl)-sn-glycero-3-phosphocholine + CMP + H(+). It participates in phospholipid metabolism; phosphatidylcholine biosynthesis; phosphatidylcholine from phosphocholine: step 2/2. Its function is as follows. Catalyzes the final step of de novo phosphatidylcholine (PC) synthesis, i.e. the transfer of choline phosphate from CDP-choline to the free hydroxyl of a diacylglycerol (DAG), producing a PC. It thereby plays a central role in the formation and maintenance of vesicular membranes. Shows a high preference for CDP-choline over CDP-ethanolamine as substrate. The sequence is that of Cholinephosphotransferase 1 (chpt1) from Xenopus laevis (African clawed frog).